Reading from the N-terminus, the 121-residue chain is uncharacterized protein (121 aa).

Positions 8-37 form a coiled coil; sequence KQLMVCRDEIKKLKLKEKEAKNRILTYLKN.

This is an uncharacterized protein from Aedes vexans (Inland floodwater mosquito).